Consider the following 440-residue polypeptide: Protein scalloped (440 aa).

The segment at 32–65 is disordered; it reads TEQQAVGPGTIPSPWTPVNAGPPGALGSADTNGS. Residues 86 to 162 constitute a DNA-binding region (TEA); it reads SADAEGVWSP…QVLARRKLRE (77 aa).

As to quaternary structure, the C-terminus of sd interacts with the C-terminal serine-rich protein domain of vg, to form a complex which acts as a selector for wing development. Interacts (via C-terminus) with yki (via N-terminus) and this interaction enhances its transcriptional activity. As to expression, subset of neuroblasts in the central nervous system and in the peripheral sense organs of the embryo. Expressed in the developing wing primordia initially along the D/V wing boundary, and by the late third larval instar, maximal expression is seen in cells at the D/V wing disk boundary. Less expression in cells located farther from this boundary. Also expressed in wing progenitor cells.

It localises to the nucleus. In terms of biological role, transcription factor which plays a key role in the Hippo/SWH (Sav/Wts/Hpo) signaling pathway, a signaling pathway that plays a pivotal role in organ size control and tumor suppression by restricting proliferation and promoting apoptosis. The core of this pathway is composed of a kinase cascade wherein Hippo (Hpo), in complex with its regulatory protein Salvador (Sav), phosphorylates and activates Warts (Wts) in complex with its regulatory protein Mats, which in turn phosphorylates and inactivates the Yorkie (Yki) oncoprotein. The Hippo/SWH signaling pathway inhibits the activity of the transcriptional complex formed by Scalloped (sd) and Yki and the target genes of this pathway include cyclin-E (cycE), diap1 and bantam. Sd promotes nuclear localization of Yki. Involved in the regulation of cell-specific gene expression during development, particularly in the differentiation of the nervous system. When in combination with vestigial (vg) it acts as a transcriptional activation complex that regulates gene expression in the wing. Binding to vg switches the DNA target selectivity of sd. Required autonomously for cell proliferation and viability within the wing blade. Required for proper sensory organ precursor (SOP) differentiation at the wing margin; required for correct expression of sens. The protein is Protein scalloped (sd) of Drosophila melanogaster (Fruit fly).